The following is a 543-amino-acid chain: Hydroxylamine reductase (543 aa).

Residues C5, C8, C17, and C23 each coordinate [4Fe-4S] cluster. Positions 236, 260, 304, 398, 426, 451, 486, and 488 each coordinate hybrid [4Fe-2O-2S] cluster. Residue C398 is modified to Cysteine persulfide.

It belongs to the HCP family. [4Fe-4S] cluster serves as cofactor. Hybrid [4Fe-2O-2S] cluster is required as a cofactor.

The protein localises to the cytoplasm. The catalysed reaction is A + NH4(+) + H2O = hydroxylamine + AH2 + H(+). Its function is as follows. Catalyzes the reduction of hydroxylamine to form NH(3) and H(2)O. This Bacteroides fragilis (strain ATCC 25285 / DSM 2151 / CCUG 4856 / JCM 11019 / LMG 10263 / NCTC 9343 / Onslow / VPI 2553 / EN-2) protein is Hydroxylamine reductase.